We begin with the raw amino-acid sequence, 494 residues long: Inositol-trisphosphate 3-kinase homolog (494 aa).

ATP is bound by residues Ser-206, Lys-218, 260-262 (EDL), and Asp-276. Substrate-binding positions include Lys-278 and 322–329 (KLRYMQFR). Lys-346 and Asp-426 together coordinate ATP. Lys-429 is a binding site for substrate.

This sequence belongs to the inositol phosphokinase (IPK) family. In terms of tissue distribution, expressed in spermatheca.

The catalysed reaction is 1D-myo-inositol 1,4,5-trisphosphate + ATP = 1D-myo-inositol 1,3,4,5-tetrakisphosphate + ADP + H(+). Unlike mammalian IP3K, may not be regulated by calmodulin. Its function is as follows. Probably by regulating inositol 1,4,5-trisphosphate levels, negatively regulates posterior body wall muscle contractions required for defecation and let-23 signaling pathway that controls spermathecal dilation and ovulation. May also regulate ovulation downstream of actin cross-linker fln-1. The chain is Inositol-trisphosphate 3-kinase homolog from Caenorhabditis elegans.